The chain runs to 1067 residues: Kinesin-like protein KIF11 (1067 aa).

The region spanning 18–359 is the Kinesin motor domain; it reads NIQVVVRCRP…LEYANRAKNI (342 aa). Residue 105–112 participates in ATP binding; it reads GQTGTGKT. Residues 365–480 are a coiled coil; that stretch reads VNQKLTKRAL…SKEQLAQEAF (116 aa). The residue at position 937 (Thr937) is a Phosphothreonine; by CDK1. Ser1046 is subject to Phosphoserine; by NEK6. The interval 1048–1067 is disordered; that stretch reads IMDEAEQSLPKSKLPLRMQN.

Belongs to the TRAFAC class myosin-kinesin ATPase superfamily. Kinesin family. BimC subfamily. In terms of assembly, heterotetramer of two heavy and two light chains. Interacts with aurka. In terms of processing, phosphorylation of Thr-937 during mitosis controls the association of this protein with the spindle apparatus. Post-translationally, a subset of this protein primarily localized at the spindle pole is phosphorylated by NEK6 during mitosis. Phosphorylated on a serine residue by aurka.

Its subcellular location is the cytoplasm. It is found in the cytoskeleton. It localises to the spindle pole. Plus end-directed motor protein required for establishing a bipolar spindle. Associates with both interphase and mitotic spindle microtubules. May be involved in nuclear divisions taking place during the development of unfertilized eggs. Required in non-mitotic cells for transport of secretory proteins from the Golgi complex to the cell surface. This chain is Kinesin-like protein KIF11, found in Xenopus tropicalis (Western clawed frog).